A 504-amino-acid polypeptide reads, in one-letter code: Histidine ammonia-lyase (504 aa).

The segment at residues 141-143 (ASG) is a cross-link (5-imidazolinone (Ala-Gly)). 2,3-didehydroalanine (Ser) is present on serine 142.

Belongs to the PAL/histidase family. Post-translationally, contains an active site 4-methylidene-imidazol-5-one (MIO), which is formed autocatalytically by cyclization and dehydration of residues Ala-Ser-Gly.

The protein resides in the cytoplasm. It catalyses the reaction L-histidine = trans-urocanate + NH4(+). It functions in the pathway amino-acid degradation; L-histidine degradation into L-glutamate; N-formimidoyl-L-glutamate from L-histidine: step 1/3. This is Histidine ammonia-lyase from Geobacillus thermodenitrificans (strain NG80-2).